Here is a 601-residue protein sequence, read N- to C-terminus: ATP-dependent lipid A-core flippase (601 aa).

The next 4 membrane-spanning stretches (helical) occupy residues 26–46 (VGLF…QPML), 82–102 (LMIV…NYFL), 167–187 (VFLF…MVAI), and 263–283 (VYTP…LFLV). The ABC transmembrane type-1 domain occupies 30 to 321 (AVSILGYVIF…LSEVSSTIQR (292 aa)). An ABC transporter domain is found at 353–589 (IEVRDLSFRY…GGHYARLHAM (237 aa)). 387 to 394 (GRSGSGKS) serves as a coordination point for ATP.

This sequence belongs to the ABC transporter superfamily. Lipid exporter (TC 3.A.1.106) family. As to quaternary structure, homodimer.

The protein resides in the cell inner membrane. It catalyses the reaction ATP + H2O + lipid A-core oligosaccharideSide 1 = ADP + phosphate + lipid A-core oligosaccharideSide 2.. In terms of biological role, involved in lipopolysaccharide (LPS) biosynthesis. Translocates lipid A-core from the inner to the outer leaflet of the inner membrane. Transmembrane domains (TMD) form a pore in the inner membrane and the ATP-binding domain (NBD) is responsible for energy generation. In Aromatoleum aromaticum (strain DSM 19018 / LMG 30748 / EbN1) (Azoarcus sp. (strain EbN1)), this protein is ATP-dependent lipid A-core flippase.